Reading from the N-terminus, the 214-residue chain is Probable transaldolase (214 aa).

The active-site Schiff-base intermediate with substrate is Lys-83.

It belongs to the transaldolase family. Type 3B subfamily.

It is found in the cytoplasm. The catalysed reaction is D-sedoheptulose 7-phosphate + D-glyceraldehyde 3-phosphate = D-erythrose 4-phosphate + beta-D-fructose 6-phosphate. It participates in carbohydrate degradation; pentose phosphate pathway; D-glyceraldehyde 3-phosphate and beta-D-fructose 6-phosphate from D-ribose 5-phosphate and D-xylulose 5-phosphate (non-oxidative stage): step 2/3. In terms of biological role, transaldolase is important for the balance of metabolites in the pentose-phosphate pathway. This Thermodesulfovibrio yellowstonii (strain ATCC 51303 / DSM 11347 / YP87) protein is Probable transaldolase.